A 397-amino-acid polypeptide reads, in one-letter code: Phosphoglycerate kinase (397 aa).

Residues 25-27, R41, 64-67, R118, and R151 contribute to the substrate site; these read DLN and HLGR. Residues K202, E324, and 350–353 each bind ATP; that span reads GGDT.

This sequence belongs to the phosphoglycerate kinase family. As to quaternary structure, monomer.

The protein localises to the cytoplasm. The enzyme catalyses (2R)-3-phosphoglycerate + ATP = (2R)-3-phospho-glyceroyl phosphate + ADP. It participates in carbohydrate degradation; glycolysis; pyruvate from D-glyceraldehyde 3-phosphate: step 2/5. This is Phosphoglycerate kinase from Acidovorax ebreus (strain TPSY) (Diaphorobacter sp. (strain TPSY)).